The sequence spans 148 residues: IQ domain-containing protein F5 (148 aa).

IQ domains follow at residues Glu-11–Ile-40 and Lys-67–Ile-96.

In Mus musculus (Mouse), this protein is IQ domain-containing protein F5 (Iqcf5).